We begin with the raw amino-acid sequence, 316 residues long: Ribosomal RNA small subunit methyltransferase H (316 aa).

S-adenosyl-L-methionine contacts are provided by residues 39–41 (GGH), Asp-56, Phe-82, Asp-103, and Gln-110.

The protein belongs to the methyltransferase superfamily. RsmH family.

Its subcellular location is the cytoplasm. The catalysed reaction is cytidine(1402) in 16S rRNA + S-adenosyl-L-methionine = N(4)-methylcytidine(1402) in 16S rRNA + S-adenosyl-L-homocysteine + H(+). Its function is as follows. Specifically methylates the N4 position of cytidine in position 1402 (C1402) of 16S rRNA. This is Ribosomal RNA small subunit methyltransferase H from Methylacidiphilum infernorum (isolate V4) (Methylokorus infernorum (strain V4)).